A 113-amino-acid polypeptide reads, in one-letter code: UPF0342 protein SpyM3_0545 (113 aa).

This sequence belongs to the UPF0342 family.

In Streptococcus pyogenes serotype M3 (strain ATCC BAA-595 / MGAS315), this protein is UPF0342 protein SpyM3_0545.